The sequence spans 123 residues: Hydrogenase maturation factor HypA (123 aa).

Position 2 (His-2) interacts with Ni(2+). 4 residues coordinate Zn(2+): Cys-77, Cys-80, Cys-96, and Cys-99.

The protein belongs to the HypA/HybF family.

Its function is as follows. Involved in the maturation of [NiFe] hydrogenases. Required for nickel insertion into the metal center of the hydrogenase. The polypeptide is Hydrogenase maturation factor HypA (Methanococcus aeolicus (strain ATCC BAA-1280 / DSM 17508 / OCM 812 / Nankai-3)).